The sequence spans 439 residues: Forkhead box protein J1-A (439 aa).

A DNA-binding region (fork-head) is located at residues 124-218 (KPPYSYATLI…INGAMKKRRL (95 aa)). Residues 273 to 293 (EHGWNSISDGKSHKRKQPLPK) form a disordered region. The segment covering 284-293 (SHKRKQPLPK) has biased composition (basic residues).

The protein belongs to the FOXJ1 family. In terms of tissue distribution, expressed in two independent areas of stage 10-11 embryos; in the dorsal blastopore lip (Spemann organizer) and shortly after in the ectodermal cells of the animal cap. As development proceeds, cells of the animal cap contribute to the epidermis and show a spotty pattern, which suggests expression in ciliated epidermal cells. Distribution of these cells is uniform in the trunk area of the embryo but more random in the head, being practically absent in the cement gland and olfactory placode. The spotted pattern becomes more dispersed as embryos grow in size. Due to cell movements during gastrulation, expression in the dorsal lip becomes located in the dorsal midline with expression restricted to the neuroectoderm. Expressed transiently in cells of the newly formed neural floor plate in the tail of older tadpoles.

Its subcellular location is the nucleus. Key transcription factor required for motile ciliogenesis. Activates genes essential for motile cilia formation and function. Required for ciliogenesis in multiciliated cells. This chain is Forkhead box protein J1-A (foxj1-a), found in Xenopus laevis (African clawed frog).